A 440-amino-acid polypeptide reads, in one-letter code: IAA-amino acid hydrolase ILR1-like 4 (440 aa).

The signal sequence occupies residues 1-23 (MSFFKWVSFVLILHLLNPTLISC). Mn(2+)-binding residues include cysteine 134, histidine 136, glutamate 170, histidine 194, and histidine 397. Positions 437–440 (KDEL) match the Prevents secretion from ER motif.

This sequence belongs to the peptidase M20 family. Mn(2+) serves as cofactor. As to expression, expressed in leaves, stems, roots, siliques and flowers. Detected in the vascular tissue of cotyledons and roots, in adult leaves, stems, siliques, petals, hydathodes and in silique abscission zones and funicles.

The protein localises to the endoplasmic reticulum lumen. It carries out the reaction a jasmonyl-L-amino acid + H2O = a jasmonate + an L-alpha-amino acid. Functionally, hydrolyzes certain amino acid conjugates of the plant growth regulator indole-3-acetic acid (IAA), including IAA-Ala, IAA-Asn, IAA-Cys, IAA-Glu, IAA-Met, IAA-Ser and IAA-Gly. Has a lower efficiency with IAA-Phe, IAA-Leu and IAA-Val and no activity with IAA-Ile. Important for IAA-Leu hydrolysis in roots. Also hydrolyzes amino acid conjugates of jasmonic acid and 12-hydroxy jasmonic acid. This chain is IAA-amino acid hydrolase ILR1-like 4, found in Arabidopsis thaliana (Mouse-ear cress).